A 331-amino-acid polypeptide reads, in one-letter code: Lipoyl synthase (331 aa).

Positions 1–14 (MSTQLDASQPSNDV) are enriched in polar residues. The segment at 1-32 (MSTQLDASQPSNDVASPAAYDPTQKQKSQAKT) is disordered. [4Fe-4S] cluster contacts are provided by Cys78, Cys83, Cys89, Cys104, Cys108, Cys111, and Ser318. The Radical SAM core domain maps to 89 to 307 (CFGKGTATFM…EREAYAMGFS (219 aa)).

It belongs to the radical SAM superfamily. Lipoyl synthase family. Requires [4Fe-4S] cluster as cofactor.

Its subcellular location is the cytoplasm. The enzyme catalyses [[Fe-S] cluster scaffold protein carrying a second [4Fe-4S](2+) cluster] + N(6)-octanoyl-L-lysyl-[protein] + 2 oxidized [2Fe-2S]-[ferredoxin] + 2 S-adenosyl-L-methionine + 4 H(+) = [[Fe-S] cluster scaffold protein] + N(6)-[(R)-dihydrolipoyl]-L-lysyl-[protein] + 4 Fe(3+) + 2 hydrogen sulfide + 2 5'-deoxyadenosine + 2 L-methionine + 2 reduced [2Fe-2S]-[ferredoxin]. It participates in protein modification; protein lipoylation via endogenous pathway; protein N(6)-(lipoyl)lysine from octanoyl-[acyl-carrier-protein]: step 2/2. Functionally, catalyzes the radical-mediated insertion of two sulfur atoms into the C-6 and C-8 positions of the octanoyl moiety bound to the lipoyl domains of lipoate-dependent enzymes, thereby converting the octanoylated domains into lipoylated derivatives. In Bordetella avium (strain 197N), this protein is Lipoyl synthase.